We begin with the raw amino-acid sequence, 242 residues long: Lysosomal membrane ascorbate-dependent ferrireductase CYB561A3 (242 aa).

Residues 1–4 (MASG) are Cytoplasmic-facing. A helical membrane pass occupies residues 5-25 (WFYLSCMVLGSLGSMCILFTA). The Cytochrome b561 domain maps to 12-219 (VLGSLGSMCI…FGLLVLYVLL (208 aa)). At 26-40 (YWMQYWRGGFAWDGT) the chain is on the lumenal side. The chain crosses the membrane as a helical span at residues 41–61 (VLMFNWHPVLMVAGMVVLYGA). Residues His47 and Arg67 each contribute to the heme b site. Topologically, residues 62 to 81 (ASLVYRLPSSWVGPRLPWKV) are cytoplasmic. L-ascorbate is bound by residues Arg76 and Lys80. Residues 82–102 (LHAALHLLAFTCTVVGLIAVF) traverse the membrane as a helical segment. Heme b contacts are provided by residues His83, 112–115 (HLYS), and His117. Residues 103 to 119 (RFHNHSRIAHLYSLHSW) are Lumenal-facing. Residues 120 to 140 (LGITTVVLFACQWFLGFAVFL) traverse the membrane as a helical segment. Residues 141–154 (LPWASQWLRSLLKP) are Cytoplasmic-facing. Arg149 is an L-ascorbate binding site. The chain crosses the membrane as a helical span at residues 155–175 (LHVFFGACILSLSITSVISGI). Residues His156 and Glu177 each contribute to the heme b site. Topologically, residues 176 to 202 (NEKLFFVLKNATKPYSSLPGEAVFANS) are lumenal. A helical membrane pass occupies residues 203 to 223 (TGLLVVAFGLLVLYVLLASSW). Heme b is bound at residue Lys224. The Cytoplasmic segment spans residues 224 to 242 (KRPDPGALTDRQPLLHDRE).

Homodimer. Heme b serves as cofactor. Post-translationally, N-glycosylated. As to expression, present in lung, spleen, thymus and testis. Present at low level in brain, heart, liver and kidney. Expressed in the alveolar macrophages of the lung, in the white pulp of the spleen, widespread in the thymus, and in the Sertoli cells of the testis (at protein level).

Its subcellular location is the late endosome membrane. The protein localises to the lysosome membrane. It catalyses the reaction Fe(3+)(out) + L-ascorbate(in) = monodehydro-L-ascorbate radical(in) + Fe(2+)(out) + H(+). Transmembrane reductase that uses ascorbate as an electron donor in the cytoplasm and transfers electrons across membranes to reduce iron cations Fe(3+) into Fe(2+) in the lumen of the late endosome and lysosome. Reduced iron can then be extruded from the late endosome and lysosome to the cytoplasm by divalent metal-specific transporters. It is therefore most probably involved in endosomal and lysosomal cellular iron homeostasis. In Mus musculus (Mouse), this protein is Lysosomal membrane ascorbate-dependent ferrireductase CYB561A3.